The primary structure comprises 348 residues: Fructose-1,6-bisphosphatase class 1 (348 aa).

Glu92, Asp111, Leu113, and Asp114 together coordinate Mg(2+). Substrate contacts are provided by residues 114–117 (DGSS) and Asn204. Glu276 is a Mg(2+) binding site.

The protein belongs to the FBPase class 1 family. Homotetramer. The cofactor is Mg(2+).

It is found in the cytoplasm. It carries out the reaction beta-D-fructose 1,6-bisphosphate + H2O = beta-D-fructose 6-phosphate + phosphate. Its pathway is carbohydrate biosynthesis; gluconeogenesis. The protein is Fructose-1,6-bisphosphatase class 1 of Methylorubrum extorquens (strain CM4 / NCIMB 13688) (Methylobacterium extorquens).